We begin with the raw amino-acid sequence, 72 residues long: Translation initiation factor IF-1 (72 aa).

The S1-like domain occupies 1 to 72 (MTKEEAIEVD…SRGRIMFRER (72 aa)).

The protein belongs to the IF-1 family. In terms of assembly, component of the 30S ribosomal translation pre-initiation complex which assembles on the 30S ribosome in the order IF-2 and IF-3, IF-1 and N-formylmethionyl-tRNA(fMet); mRNA recruitment can occur at any time during PIC assembly.

It is found in the cytoplasm. One of the essential components for the initiation of protein synthesis. Stabilizes the binding of IF-2 and IF-3 on the 30S subunit to which N-formylmethionyl-tRNA(fMet) subsequently binds. Helps modulate mRNA selection, yielding the 30S pre-initiation complex (PIC). Upon addition of the 50S ribosomal subunit IF-1, IF-2 and IF-3 are released leaving the mature 70S translation initiation complex. The polypeptide is Translation initiation factor IF-1 (Treponema pallidum (strain Nichols)).